Reading from the N-terminus, the 102-residue chain is Urease subunit beta (102 aa).

This sequence belongs to the urease beta subunit family. As to quaternary structure, heterotrimer of UreA (gamma), UreB (beta) and UreC (alpha) subunits. Three heterotrimers associate to form the active enzyme.

Its subcellular location is the cytoplasm. The catalysed reaction is urea + 2 H2O + H(+) = hydrogencarbonate + 2 NH4(+). It participates in nitrogen metabolism; urea degradation; CO(2) and NH(3) from urea (urease route): step 1/1. This chain is Urease subunit beta, found in Trichodesmium erythraeum (strain IMS101).